A 520-amino-acid polypeptide reads, in one-letter code: 2-isopropylmalate synthase (520 aa).

The 263-residue stretch at 12-274 (IRIFDTTLRD…DSAINTPRIV (263 aa)) folds into the Pyruvate carboxyltransferase domain. Residues Asp21, His209, His211, and Asn245 each contribute to the Mn(2+) site. A regulatory domain region spans residues 396 to 520 (RLASMTISDV…VIAGKTAAVA (125 aa)).

Belongs to the alpha-IPM synthase/homocitrate synthase family. LeuA type 1 subfamily. As to quaternary structure, homodimer. Mn(2+) is required as a cofactor.

Its subcellular location is the cytoplasm. It catalyses the reaction 3-methyl-2-oxobutanoate + acetyl-CoA + H2O = (2S)-2-isopropylmalate + CoA + H(+). It functions in the pathway amino-acid biosynthesis; L-leucine biosynthesis; L-leucine from 3-methyl-2-oxobutanoate: step 1/4. Its function is as follows. Catalyzes the condensation of the acetyl group of acetyl-CoA with 3-methyl-2-oxobutanoate (2-ketoisovalerate) to form 3-carboxy-3-hydroxy-4-methylpentanoate (2-isopropylmalate). This Xanthomonas oryzae pv. oryzae (strain KACC10331 / KXO85) protein is 2-isopropylmalate synthase.